The following is a 227-amino-acid chain: 6-phosphogluconolactonase (227 aa).

The protein belongs to the glucosamine/galactosamine-6-phosphate isomerase family. 6-phosphogluconolactonase subfamily.

The catalysed reaction is 6-phospho-D-glucono-1,5-lactone + H2O = 6-phospho-D-gluconate + H(+). The protein operates within carbohydrate degradation; pentose phosphate pathway; D-ribulose 5-phosphate from D-glucose 6-phosphate (oxidative stage): step 2/3. Functionally, hydrolysis of 6-phosphogluconolactone to 6-phosphogluconate. This Helicobacter pylori (strain ATCC 700392 / 26695) (Campylobacter pylori) protein is 6-phosphogluconolactonase (pgl).